We begin with the raw amino-acid sequence, 103 residues long: Nucleoid-associated protein NIS_0256 (103 aa).

This sequence belongs to the YbaB/EbfC family. As to quaternary structure, homodimer.

The protein resides in the cytoplasm. The protein localises to the nucleoid. Functionally, binds to DNA and alters its conformation. May be involved in regulation of gene expression, nucleoid organization and DNA protection. In Nitratiruptor sp. (strain SB155-2), this protein is Nucleoid-associated protein NIS_0256.